The chain runs to 492 residues: Trypanothione reductase (492 aa).

35–52 (DVQTHHGPPHYAALGGTC) lines the FAD pocket. An intrachain disulfide couples cysteine 52 to cysteine 57. The active-site Proton acceptor is the histidine 461.

The protein belongs to the class-I pyridine nucleotide-disulfide oxidoreductase family. In terms of assembly, homodimer. Requires FAD as cofactor.

Its subcellular location is the cytoplasm. The catalysed reaction is trypanothione + NADP(+) = trypanothione disulfide + NADPH + H(+). Trypanothione is the parasite analog of glutathione; this enzyme is the equivalent of glutathione reductase. The polypeptide is Trypanothione reductase (TPR) (Trypanosoma brucei brucei).